Here is a 478-residue protein sequence, read N- to C-terminus: Glycogen synthase (478 aa).

Lys15 serves as a coordination point for ADP-alpha-D-glucose.

It belongs to the glycosyltransferase 1 family. Bacterial/plant glycogen synthase subfamily.

It carries out the reaction [(1-&gt;4)-alpha-D-glucosyl](n) + ADP-alpha-D-glucose = [(1-&gt;4)-alpha-D-glucosyl](n+1) + ADP + H(+). The protein operates within glycan biosynthesis; glycogen biosynthesis. In terms of biological role, synthesizes alpha-1,4-glucan chains using ADP-glucose. This Streptococcus uberis (strain ATCC BAA-854 / 0140J) protein is Glycogen synthase.